We begin with the raw amino-acid sequence, 323 residues long: Putative HTH-type transcriptional regulatory protein Hlac_0273 (323 aa).

In terms of domain architecture, HTH cro/C1-type spans leucine 132–leucine 189. The H-T-H motif DNA-binding region spans leucine 143–aspartate 162. Residues valine 188–aspartate 211 form a disordered region.

This is Putative HTH-type transcriptional regulatory protein Hlac_0273 from Halorubrum lacusprofundi (strain ATCC 49239 / DSM 5036 / JCM 8891 / ACAM 34).